A 256-amino-acid polypeptide reads, in one-letter code: Thiazole synthase (256 aa).

The Schiff-base intermediate with DXP role is filled by lysine 95. 1-deoxy-D-xylulose 5-phosphate is bound by residues glycine 156, alanine 182–glycine 183, and asparagine 204–threonine 205.

It belongs to the ThiG family. As to quaternary structure, homotetramer. Forms heterodimers with either ThiH or ThiS.

It localises to the cytoplasm. The enzyme catalyses [ThiS sulfur-carrier protein]-C-terminal-Gly-aminoethanethioate + 2-iminoacetate + 1-deoxy-D-xylulose 5-phosphate = [ThiS sulfur-carrier protein]-C-terminal Gly-Gly + 2-[(2R,5Z)-2-carboxy-4-methylthiazol-5(2H)-ylidene]ethyl phosphate + 2 H2O + H(+). Its pathway is cofactor biosynthesis; thiamine diphosphate biosynthesis. Functionally, catalyzes the rearrangement of 1-deoxy-D-xylulose 5-phosphate (DXP) to produce the thiazole phosphate moiety of thiamine. Sulfur is provided by the thiocarboxylate moiety of the carrier protein ThiS. In vitro, sulfur can be provided by H(2)S. This Klebsiella pneumoniae subsp. pneumoniae (strain ATCC 700721 / MGH 78578) protein is Thiazole synthase.